Reading from the N-terminus, the 312-residue chain is Aquaporin-6 (312 aa).

Topologically, residues 1–50 are cytoplasmic; sequence MDDKFDDDALPNSKTTAKDYEDKLPEYDYTTTFPNTWMRLREPFREYFAE. A helical transmembrane segment spans residues 51–71; it reads FVGVAVLIIFGVGADCQVVLS. Residues 72–89 are Extracellular-facing; the sequence is ANTGVASSPKGSYLSLNC. The chain crosses the membrane as a helical span at residues 90 to 110; the sequence is GWAIGTAMGVWISGGISGGHI. The NPA 1 signature appears at 111-113; it reads NPA. The Cytoplasmic segment spans residues 111–128; sequence NPAVTLAMATWRGFPWWK. A helical membrane pass occupies residues 129 to 149; sequence VPGFIFAQLLGGIVGAGLVYV. Over 150 to 183 the chain is Extracellular; sequence NYIHAIDIVEGGRHIRTLDTAGLFATYAADYMTN. The N-linked (GlcNAc...) asparagine glycan is linked to Asn-183. A helical membrane pass occupies residues 184 to 204; that stretch reads LSCFFSEFLATAVLIIVIHAM. Over 205–213 the chain is Cytoplasmic; it reads NDKRNTPPP. Residues 214-234 form a helical membrane-spanning segment; it reads AGIVPFVLFFLILGIGASLGM. Over 235-267 the chain is Extracellular; sequence ETGYAINPARDLGPRMLTAMVGYGRQVFAFRNQ. Residues 241–243 carry the NPA 2 motif; sequence NPA. A helical transmembrane segment spans residues 268–288; it reads YWIWCPVLAPFLGAQVGTIFY. Residues 289 to 312 lie on the Cytoplasmic side of the membrane; the sequence is DLFFYKGQDNVFGRLGSHIHISPA.

The protein belongs to the MIP/aquaporin (TC 1.A.8) family.

The protein resides in the membrane. The enzyme catalyses H2O(in) = H2O(out). Water channel required to facilitate the transport of water across membranes. Does not mediate the transport carbon dioxide nor nitric oxide across the membrane. Plays a key role in root water transport of mycorrhizal plant such ectomycorrhizal white spruce or trembling aspen via the hydration at the hyphal-root interphase. Contributes in fungal cellular processes during the basidiocarp formation. The chain is Aquaporin-6 from Laccaria bicolor (Bicoloured deceiver).